We begin with the raw amino-acid sequence, 77 residues long: Acyl carrier protein (77 aa).

A Carrier domain is found at 2–77; sequence AEVLEKVTKI…DAVKYIEANA (76 aa). Ser-37 is modified (O-(pantetheine 4'-phosphoryl)serine).

It belongs to the acyl carrier protein (ACP) family. 4'-phosphopantetheine is transferred from CoA to a specific serine of apo-ACP by AcpS. This modification is essential for activity because fatty acids are bound in thioester linkage to the sulfhydryl of the prosthetic group.

It is found in the cytoplasm. It functions in the pathway lipid metabolism; fatty acid biosynthesis. Functionally, carrier of the growing fatty acid chain in fatty acid biosynthesis. The chain is Acyl carrier protein from Listeria innocua serovar 6a (strain ATCC BAA-680 / CLIP 11262).